A 218-amino-acid chain; its full sequence is MKIFLDTANLEEIKKGVEWGIVDGVTTNPTLISKEGAEFKQRVKEICDLVKGPVSAEVVSLDYEGMVREARELAQISEYVVIKIPMTPDGIKAVKTLSAEGIKTNVTLVFSPAQAILAAKAGATYVSPFVGRMDDLSNDGMRMLGEIVEIYNNYGFETEIIAASIRHPMHVVEAALMGVDIVTIPFAVLERLFKHPMTDLGIERFMEDWKKYLENLKK.

Catalysis depends on Lys-83, which acts as the Schiff-base intermediate with substrate.

This sequence belongs to the transaldolase family. Type 3B subfamily.

It is found in the cytoplasm. It carries out the reaction D-sedoheptulose 7-phosphate + D-glyceraldehyde 3-phosphate = D-erythrose 4-phosphate + beta-D-fructose 6-phosphate. It participates in carbohydrate degradation; pentose phosphate pathway; D-glyceraldehyde 3-phosphate and beta-D-fructose 6-phosphate from D-ribose 5-phosphate and D-xylulose 5-phosphate (non-oxidative stage): step 2/3. Transaldolase is important for the balance of metabolites in the pentose-phosphate pathway. This Thermotoga sp. (strain RQ2) protein is Probable transaldolase.